The primary structure comprises 158 residues: Large ribosomal subunit protein uL22 (158 aa).

It belongs to the universal ribosomal protein uL22 family. In terms of assembly, part of the 50S ribosomal subunit.

Its function is as follows. This protein binds specifically to 23S rRNA. It makes multiple contacts with different domains of the 23S rRNA in the assembled 50S subunit and ribosome. In terms of biological role, the globular domain of the protein is located near the polypeptide exit tunnel on the outside of the subunit, while an extended beta-hairpin is found that lines the wall of the exit tunnel in the center of the 70S ribosome. In Haloquadratum walsbyi (strain DSM 16790 / HBSQ001), this protein is Large ribosomal subunit protein uL22.